Consider the following 340-residue polypeptide: Entry-fusion complex protein OPG094 (340 aa).

Residues 1–20 (MGGGVSVELPKRDPPPGVPT) are disordered. Gly2 carries N-myristoyl glycine; by host lipidation. Topologically, residues 2-319 (GGGVSVELPK…VQHNIKHSFD (318 aa)) are virion surface. The helical; Signal-anchor for type II membrane protein transmembrane segment at 320–340 (LKLHLISLLSLLVIWILIVAI) threads the bilayer.

This sequence belongs to the orthopoxvirus OPG086 family. In terms of assembly, interacts with OPG143. Component of the entry fusion complex (EFC) composed of OPG053, OPG076, OPG086, OPG094, OPG095, OPG099, OPG107, OPG143, OPG104, OPG147 and OPG155. Except for OPG095 and OPG053, each of the EFC proteins is required for assembly or stability of the complex. Unglycosylated because produced in viral factories instead of the classic ER -Golgi route.

Its subcellular location is the virion membrane. In terms of biological role, component of the entry fusion complex (EFC), which consists of 11 proteins. During cell infection, this complex mediates entry of the virion core into the host cytoplasm by a two-step mechanism consisting of lipid mixing of the viral and cellular membranes and subsequent pore formation. This chain is Entry-fusion complex protein OPG094 (OPG094), found in Vaccinia virus (strain Copenhagen) (VACV).